The chain runs to 772 residues: Protein transport protein SEC23 F (772 aa).

The Zn(2+) site is built by Cys65, Cys68, Cys87, and Cys90. Residues 65 to 90 (CKTCKALLNAFARVDFAAMNWVCPFC) form a zinc finger-like region.

The protein belongs to the SEC23/SEC24 family. SEC23 subfamily. As to quaternary structure, component of the coat protein complex II (COPII), composed of at least five proteins: the Sec23/24 complex, the Sec13/31 complex and Sar1. Interacts with SEC24A.

It is found in the cytoplasmic vesicle. The protein resides in the COPII-coated vesicle membrane. Its subcellular location is the endoplasmic reticulum membrane. The protein localises to the membrane. In terms of biological role, component of the coat protein complex II (COPII) which promotes the formation of transport vesicles from the endoplasmic reticulum (ER). The coat has two main functions, the physical deformation of the endoplasmic reticulum membrane into vesicles and the selection of cargo molecules. In Arabidopsis thaliana (Mouse-ear cress), this protein is Protein transport protein SEC23 F.